The chain runs to 227 residues: Probable septum site-determining protein MinC (227 aa).

This sequence belongs to the MinC family. Interacts with MinD and FtsZ.

Cell division inhibitor that blocks the formation of polar Z ring septums. Rapidly oscillates between the poles of the cell to destabilize FtsZ filaments that have formed before they mature into polar Z rings. Prevents FtsZ polymerization. In Shouchella clausii (strain KSM-K16) (Alkalihalobacillus clausii), this protein is Probable septum site-determining protein MinC.